The following is a 428-amino-acid chain: MKIHKHAPMNGVIHIPGDKSISHRSVMFGAIANGTTVVKNFLPGADCLSTIDCFRKMGVDIEQKGTDVVIHGKGLKELKEPSDVLDVGNSGTTIRLMMGILAGCEFHSTLIGDESIAKRPMQRVTGPLKQLGAKIDGRANGEYTPLSIRGGHLKGISYESPVASAQIKSAVLLAGLQAEGTTTLTEPHKSRDHTERMLSMFGVKLDEDEQSVSIEGGQTLKATDIFVPGDISSAAFFLVAGSIVPNSRIVLKNVGLNKTRTGIIDVLKQMGANLEINEVDAKGGEPYGDLTISTSSLKGIEISGDVISRLIDEIPIIALLATQAEGTTIIKDAAELKVKETNRIDTVVSELKKLGADIEATEDGMKIHGKTPLQGGAVVSSYGDHRIGMMLGIAACITKQAVEIEDTDAVRVSYPNFFEHIEYLTKTV.

Residues K19, S20, and R24 each coordinate 3-phosphoshikimate. Residue K19 coordinates phosphoenolpyruvate. Residues G91 and R119 each contribute to the phosphoenolpyruvate site. 3-phosphoshikimate contacts are provided by S164, Q166, D312, and K339. Q166 lines the phosphoenolpyruvate pocket. D312 acts as the Proton acceptor in catalysis. Phosphoenolpyruvate contacts are provided by R343 and R386.

It belongs to the EPSP synthase family. As to quaternary structure, monomer.

It is found in the cytoplasm. It carries out the reaction 3-phosphoshikimate + phosphoenolpyruvate = 5-O-(1-carboxyvinyl)-3-phosphoshikimate + phosphate. The protein operates within metabolic intermediate biosynthesis; chorismate biosynthesis; chorismate from D-erythrose 4-phosphate and phosphoenolpyruvate: step 6/7. Functionally, catalyzes the transfer of the enolpyruvyl moiety of phosphoenolpyruvate (PEP) to the 5-hydroxyl of shikimate-3-phosphate (S3P) to produce enolpyruvyl shikimate-3-phosphate and inorganic phosphate. The polypeptide is 3-phosphoshikimate 1-carboxyvinyltransferase (Bacillus pumilus (strain SAFR-032)).